We begin with the raw amino-acid sequence, 152 residues long: MILVKKIIDKLRPVVIDILSQLGLELFDITLRRERRKLVLRVVIDDPENYVSIRQCEIVSSQIGNYLDEADLIDSSYILEVSSPGLDRPLREMKDYNRFVGRLAKIWLKDGKVLVGNIKETTENTVSIELKNGEIITFSFDQIKKGKLEIDF.

This sequence belongs to the RimP family.

It localises to the cytoplasm. Required for maturation of 30S ribosomal subunits. The protein is Ribosome maturation factor RimP of Pseudothermotoga lettingae (strain ATCC BAA-301 / DSM 14385 / NBRC 107922 / TMO) (Thermotoga lettingae).